The following is a 547-amino-acid chain: Pyochelin synthase PchD (547 aa).

This sequence belongs to the ATP-dependent AMP-binding enzyme family.

The catalysed reaction is salicylate + holo-[ACP] + ATP = salicyl-[ACP] + AMP + diphosphate. It participates in siderophore biosynthesis. It functions in the pathway antifungal biosynthesis. Its function is as follows. Involved in the biosynthesis of the siderophore pyochelin. Specifically adenylates salicylate and loads it onto the holo form of PchE via a thioester linkage to the phosphopanthetheine moiety. Is also involved in the synthesis of the antifungal antibiotic dihydroaeruginoic acid (Dha or hydroxyphenyl-thiazolinyl-carboxylate), a precursor of pyochelin. This is Pyochelin synthase PchD from Pseudomonas aeruginosa (strain ATCC 15692 / DSM 22644 / CIP 104116 / JCM 14847 / LMG 12228 / 1C / PRS 101 / PAO1).